We begin with the raw amino-acid sequence, 65 residues long: MFTLKKSLLLLFFIGVIKLSLCEEERNADDDERRDDPDEMDVEVENRSAVGRHGRRFGLRKHRKH.

Positions Met-1–Cys-22 are cleaved as a signal peptide. Residues Glu-23–Arg-47 constitute a propeptide that is removed on maturation. Positions Arg-26–Glu-43 are enriched in acidic residues. The tract at residues Arg-26–His-65 is disordered. Positions Val-50–His-65 are enriched in basic residues.

This sequence belongs to the frog skin active peptide (FSAP) family. Brevinin subfamily. As to expression, expressed by the skin glands.

It localises to the secreted. In terms of biological role, antimicrobial peptide. Has activity against the Gram-positive bacterium S.aureus (MIC=6 uM) and the Gram-negative bacterium E.coli (MIC=3 uM). Lacks hemolytic activity against human erythrocytes. The polypeptide is Dybowskin-2CDYa (Rana dybowskii (Dybovsky's frog)).